The primary structure comprises 448 residues: Probable glycine dehydrogenase (decarboxylating) subunit 1 (448 aa).

It belongs to the GcvP family. N-terminal subunit subfamily. The glycine cleavage system is composed of four proteins: P, T, L and H. In this organism, the P 'protein' is a heterodimer of two subunits.

The enzyme catalyses N(6)-[(R)-lipoyl]-L-lysyl-[glycine-cleavage complex H protein] + glycine + H(+) = N(6)-[(R)-S(8)-aminomethyldihydrolipoyl]-L-lysyl-[glycine-cleavage complex H protein] + CO2. In terms of biological role, the glycine cleavage system catalyzes the degradation of glycine. The P protein binds the alpha-amino group of glycine through its pyridoxal phosphate cofactor; CO(2) is released and the remaining methylamine moiety is then transferred to the lipoamide cofactor of the H protein. The polypeptide is Probable glycine dehydrogenase (decarboxylating) subunit 1 (gcvPA) (Bacillus subtilis (strain 168)).